We begin with the raw amino-acid sequence, 120 residues long: NAD(P)H-quinone oxidoreductase subunit 3 (120 aa).

3 consecutive transmembrane segments (helical) span residues 10 to 30, 64 to 84, and 89 to 109; these read FLGF…TNLI, MFAL…PWAV, and LGLL…IALA.

This sequence belongs to the complex I subunit 3 family. NDH-1 can be composed of about 15 different subunits; different subcomplexes with different compositions have been identified which probably have different functions.

The protein localises to the cellular thylakoid membrane. It catalyses the reaction a plastoquinone + NADH + (n+1) H(+)(in) = a plastoquinol + NAD(+) + n H(+)(out). The enzyme catalyses a plastoquinone + NADPH + (n+1) H(+)(in) = a plastoquinol + NADP(+) + n H(+)(out). Its function is as follows. NDH-1 shuttles electrons from an unknown electron donor, via FMN and iron-sulfur (Fe-S) centers, to quinones in the respiratory and/or the photosynthetic chain. The immediate electron acceptor for the enzyme in this species is believed to be plastoquinone. Couples the redox reaction to proton translocation, and thus conserves the redox energy in a proton gradient. Cyanobacterial NDH-1 also plays a role in inorganic carbon-concentration. This Prochlorococcus marinus (strain MIT 9301) protein is NAD(P)H-quinone oxidoreductase subunit 3.